A 307-amino-acid chain; its full sequence is MAQPQQHKGGYKQINKALNICAFEDYLSAQLKHLPQLADVEQLSPRVIRVLGQNAGKGTNTYIVGTGPQRLIIDTGQGIPEWADILDATLKERSISLSHVFLSHWHGDHTGGVPDLLRLYPNLAGAIYKNSPGSDQQPIDDGQVFRVEGATIRAVHGPGHSHDHMCFILEEENAMFTGDNVLGHGTSAVEELGVYMETLRKLNSHHCAVGYPAHGDVITNLPAKIAGELAQKMRREKQVLLTLDRINKESRRTGQVVLVHGDGIDEEVRKMALEPFIDEVLRKLAEDGKVAFEMRGGVKRWFGVGVL.

4 residues coordinate Zn(2+): H104, H106, D108, and H109. D108 serves as the catalytic Proton donor/acceptor.

It belongs to the metallo-beta-lactamase superfamily. The cofactor is Zn(2+).

It carries out the reaction atrochrysone carboxyl-[ACP] + H2O = atrochrysone carboxylate + holo-[ACP] + H(+). It participates in secondary metabolite biosynthesis. Functionally, atrochrysone carboxyl ACP thioesterase; part of the gene cluster that mediates the biosynthesis of monodictyphenone, a prenyl xanthone derivative. The pathway begins with the synthesis of atrochrysone thioester by the polyketide synthase (PKS) mdpG. The atrochrysone carboxyl ACP thioesterase mdpF then breaks the thioester bond and releases the atrochrysone carboxylic acid from mdpG. The atrochrysone carboxylic acid is then converted to atrochrysone which is further transformed into emodin anthrone. The next step is performed by the anthrone oxygenase mdpH that catalyzes the oxidation of emodinanthrone to emodin. Emodin is further modified to yield monodictyphenone via several steps involving mdpB, mdpC mdpJ, mdpK and mdpL. The short chain dehydrogenase mdpC converts the tautomers of emodin hydroquinone into the 3-hydroxy-3,4-dihydroan-thracen-1(2H)-one derivative. These enzymes with xptA, xptB and xptC are also proposed to be involved in the synthesis of shamixanthone from emodin. Especially, direct reduction of emodin by the short chain dehydrogenase mdpC followed by dehydration catalyzed by the scytalone dehydratase-like protein mdpB gives loss of oxygen and formation of chrysophanol intermediate in two simple steps. This chain is Atrochrysone carboxyl ACP thioesterase, found in Emericella nidulans (strain FGSC A4 / ATCC 38163 / CBS 112.46 / NRRL 194 / M139) (Aspergillus nidulans).